The following is a 139-amino-acid chain: Large ribosomal subunit protein uL22 (139 aa).

The interval 1–22 (MVSENEKTRRPKRSIQHRQNKD) is disordered. Residues 9–18 (RRPKRSIQHR) show a composition bias toward basic residues.

This sequence belongs to the universal ribosomal protein uL22 family. In terms of assembly, part of the 50S ribosomal subunit.

Functionally, this protein binds specifically to 23S rRNA; its binding is stimulated by other ribosomal proteins, e.g. L4, L17, and L20. It is important during the early stages of 50S assembly. It makes multiple contacts with different domains of the 23S rRNA in the assembled 50S subunit and ribosome. Its function is as follows. The globular domain of the protein is located near the polypeptide exit tunnel on the outside of the subunit, while an extended beta-hairpin is found that lines the wall of the exit tunnel in the center of the 70S ribosome. The polypeptide is Large ribosomal subunit protein uL22 (Pseudothermotoga lettingae (strain ATCC BAA-301 / DSM 14385 / NBRC 107922 / TMO) (Thermotoga lettingae)).